The primary structure comprises 1196 residues: NACHT, LRR and PYD domains-containing protein 1b allele 5 (1196 aa).

The tract at residues 1–22 (MEESPPKQKSNTKVTQHEGQQD) is disordered. The NACHT domain maps to 126–435 (QLVIIEGAAG…EFFAAISCIL (310 aa)). 132-139 (GAAGIGKS) contacts ATP. LRR repeat units lie at residues 627–647 (NLEG…QSLC) and 684–704 (SLTE…RMLC). Residues 789 to 922 (FWGPTGPVAT…GYTVLKNPSF (134 aa)) form a ZU5 region. An FIIND domain is found at 789 to 1072 (FWGPTGPVAT…KFDHLCDQEF (284 aa)). The UPA stretch occupies residues 923-1072 (SPMGVVLRII…KFDHLCDQEF (150 aa)). The region spanning 1106-1189 (HFMDQHREQL…HLVMDLFEKS (84 aa)) is the CARD domain.

This sequence belongs to the NLRP family. As to quaternary structure, interacts with DPP9; leading to inhibit activation of the inflammasome. DPP9 acts via formation of a ternary complex, composed of a DPP9 homodimer, one full-length Nlrp1b protein, and one cleaved C-terminus of Nlrp1b (NACHT, LRR and PYD domains-containing protein 1b, C-terminus). Interacts with DPP8; leading to inhibit activation of the inflammasome, probably via formation of a ternary complex with DPP8. Interacts (via LRR repeats) with BCL2 and BCL2L1 (via the loop between motifs BH4 and BH3). Interacts with NOD2; this interaction may increase IL1B release. Interacts with EIF2AK2/PKR; this interaction requires EIF2AK2 activity, is accompanied by EIF2AK2 autophosphorylation and promotes inflammasome assembly in response to B.anthracis lethal toxin. Interacts with MEFV; this interaction targets Nlrp1b to degradation by autophagy, hence preventing excessive IL1B- and IL18-mediated inflammation. In terms of assembly, interacts with the C-terminal part of Nlrp1b (NACHT, LRR and PYD domains-containing protein 1b, C-terminus) in absence of pathogens and other damage-associated signals. Interacts with the N-terminal part of Nlrp1b (NACHT, LRR and PYD domains-containing protein 1b, N-terminus) in absence of pathogens and other damage-associated signals. Homomultimer; forms the Nlrp1b inflammasome polymeric complex, a filament composed of homopolymers of this form in response to pathogens and other damage-associated signals. The Nlrp1b inflammasome polymeric complex directly recruits pro-caspase-1 (proCASP1) independently of PYCARD/ASC. Interacts (via CARD domain) with CASP1 (via CARD domain); leading to CASP1 activation. Post-translationally, autocatalytically cleaved. Autocatalytic cleavage in FIIND region occurs constitutively, prior to activation signals, and is required for inflammasome activity (IL1B release), possibly by facilitating CASP1 binding. Both N- and C-terminal parts remain associated non-covalently. Ubiquitinated by the N-end rule pathway in response to pathogens and other damage-associated signals, leading to its degradation by the proteasome and subsequent release of the cleaved C-terminal part of the protein (NACHT, LRR and PYD domains-containing protein 1b, C-terminus), which polymerizes and forms the Nlrp1b inflammasome. In terms of processing, (Microbial infection) Cleavage by B.anthracis lethal toxin (LT) endopeptidase promotes ubiquitination and degradation of the N-terminal part, releasing the cleaved C-terminal part of the protein (NACHT, LRR and PYD domains-containing protein 1b, C-terminus), which polymerizes and forms the Nlrp1b inflammasome. Expressed in macrophages.

Its subcellular location is the cytoplasm. It is found in the cytosol. The protein localises to the inflammasome. Its activity is regulated as follows. Activated by cleavage by B.anthracis lethal toxin (LT) endopeptidase. Cleavage by LT promotes ubiquitination and degradation of the N-terminal part, releasing the cleaved C-terminal part of the protein (NACHT, LRR and PYD domains-containing protein 1b, C-terminus), which polymerizes and forms the Nlrp1b inflammasome. Nlrp1b inflammasome is inhibited by DPP8 and DPP9, which sequester the C-terminal fragment of Nlrp1b (NACHT, LRR and PYD domains-containing protein 1b, C-terminus) in a ternary complex, thereby preventing Nlrp1b oligomerization and activation. Nlrp1b inflammasome is activated by Val-boroPro (Talabostat, PT-100), an inhibitor of dipeptidyl peptidases DPP8 and DPP9. Val-boroPro relieves inhibition of DPP8 and/or DPP9 by promoting disruption of the ternary complex, releasing its C-terminal part from autoinhibition. Activated by metabolic inhibitors, such as 2-deoxy-D-glucose and sodium azide. Not activated by muramyl dipeptide, nor by full-length bacterial peptidoglycan. In terms of biological role, acts as the sensor component of the Nlrp1b inflammasome, which mediates inflammasome activation in response to various pathogen-associated signals, leading to subsequent pyroptosis. Inflammasomes are supramolecular complexes that assemble in the cytosol in response to pathogens and other damage-associated signals and play critical roles in innate immunity and inflammation. Acts as a recognition receptor (PRR): recognizes specific pathogens and other damage-associated signals, such as B.anthracis lethal toxin (LT) or Val-boroPro inhibitor, and mediates the formation of the inflammasome polymeric complex. In response to pathogen-associated signals, the N-terminal part of Nlrp1b is degraded by the proteasome, releasing the cleaved C-terminal part of the protein (NACHT, LRR and PYD domains-containing protein 1b, C-terminus), which polymerizes to initiate the formation of the inflammasome complex: the inflammasome directly recruits pro-caspase-1 (proCASP1) independently of PYCARD/ASC and promotes caspase-1 (CASP1) activation, which subsequently cleaves and activates inflammatory cytokines IL1B and IL18 and gasdermin-D (GSDMD), leading to pyroptosis. In the absence of GSDMD expression, the Nlrp1b inflammasome is able to recruit and activate CASP8, leading to activation of gasdermin-E (GSDME). Activation of Nlrp1b inflammasome is also required for HMGB1 secretion; the active cytokines and HMGB1 stimulate inflammatory responses. Primary mediator of macrophage susceptibility to B.anthracis LT: in response to B.anthracis infection, macrophages and dendritic cells release IL1B and undergo pyroptosis. This early inflammatory response to the toxin increases resistance to infection by B.anthracis spores. Constitutes the precursor of the Nlrp1b inflammasome, which mediates autoproteolytic processing within the FIIND domain to generate the N-terminal and C-terminal parts, which are associated non-covalently in absence of pathogens and other damage-associated signals. Its function is as follows. Regulatory part that prevents formation of the Nlrp1b inflammasome: in absence of pathogens and other damage-associated signals, interacts with the C-terminal part of Nlrp1b (NACHT, LRR and PYD domains-containing protein 1b, C-terminus), preventing activation of the Nlrp1b inflammasome. In response to pathogen-associated signals, this part is ubiquitinated by the N-end rule pathway and degraded by the proteasome, releasing the cleaved C-terminal part of the protein, which polymerizes and forms the Nlrp1b inflammasome. Functionally, constitutes the active part of the Nlrp1b inflammasome. In absence of pathogens and other damage-associated signals, interacts with the N-terminal part of Nlrp1b (NACHT, LRR and PYD domains-containing protein 1b, N-terminus), preventing activation of the Nlrp1b inflammasome. In response to pathogen-associated signals, the N-terminal part of Nlrp1b is degraded by the proteasome, releasing this form, which polymerizes to form the Nlrp1b inflammasome complex: the Nlrp1b inflammasome complex then directly recruits pro-caspase-1 (proCASP1) and promotes caspase-1 (CASP1) activation, leading to gasdermin-D (GSDMD) cleavage and subsequent pyroptosis. The polypeptide is NACHT, LRR and PYD domains-containing protein 1b allele 5 (Nlrp1b) (Mus musculus (Mouse)).